Here is a 642-residue protein sequence, read N- to C-terminus: Dihydrolipoyllysine-residue acetyltransferase component of pyruvate dehydrogenase complex, mitochondrial (642 aa).

The transit peptide at 1–85 directs the protein to the mitochondrion; the sequence is MWRVCARRAR…LLGSPSRRSY (85 aa). The segment at 80 to 99 is disordered; the sequence is PSRRSYSLPPHQKVPLPSLS. Lipoyl-binding domains are found at residues 90–166 and 217–293; these read HQKV…CITV and HMQI…CIIV. Position 99 is a phosphoserine (Ser-99). Lys-131 and Lys-258 each carry N6-lipoyllysine. Positions 313 to 346 are disordered; that stretch reads LKPQAAPPAPPPVAAVPPTPQPVAPTPSAAPAGP. Residues 317–337 show a composition bias toward pro residues; it reads AAPPAPPPVAAVPPTPQPVAP. Residues 351 to 388 enclose the Peripheral subunit-binding (PSBD) domain; that stretch reads FVSPLAKKLAAEKGIDLTQVKGTGPEGRIIKKDIDSFV. CoA is bound at residue Arg-456. Residue Lys-461 is modified to N6-acetyllysine. Lys-468 carries the N6-succinyllysine modification. Residue Ser-470 participates in CoA binding. Lys-542 carries the post-translational modification N6-succinyllysine. The CoA site is built by Ser-561, Asn-562, and Gly-586. Residues His-615 and Asp-619 contribute to the active site.

This sequence belongs to the 2-oxoacid dehydrogenase family. Part of the pyruvate dehydrogenase complex (PDHc) that is a multi-enzyme complex composed of multiple copies of three enzymes, pyruvate dehydrogenase (subunits PDH1A and PDHB, E1 component), dihydrolipoamide acetyltransferase (DLAT, E2 component), and dihydrolipoamide dehydrogenase (DLD, E3 component) to which is added an additional protein the E3-binding protein (PDHX, E3BP). In terms of structural architecture, the E2 and E3BP components assemble into a 60meric central core with icosahedral symmetry. The central core is decorated with E1 and E3 proteins. Currently, two alternative models for the E2:E3BP stoichiometry are considered as being either 48:12 (E2(48)-E3BP(12)) or 40:20 (E2(40)-E3BP(20)). Interacts with PDK2 and PDK3. Interacts with SIRT4. Interacts with PDHB. (R)-lipoate serves as cofactor. In terms of processing, delipoylated at Lys-131 and Lys-258 by SIRT4, delipoylation decreases the PHD complex activity.

The protein resides in the mitochondrion matrix. It carries out the reaction N(6)-[(R)-dihydrolipoyl]-L-lysyl-[protein] + acetyl-CoA = N(6)-[(R)-S(8)-acetyldihydrolipoyl]-L-lysyl-[protein] + CoA. As part of the pyruvate dehydrogenase complex, catalyzes the transfers of an acetyl group to a lipoic acid moiety. The pyruvate dehydrogenase complex, catalyzes the overall conversion of pyruvate to acetyl-CoA and CO(2), and thereby links cytoplasmic glycolysis and the mitochondrial tricarboxylic acid (TCA) cycle. In Mus musculus (Mouse), this protein is Dihydrolipoyllysine-residue acetyltransferase component of pyruvate dehydrogenase complex, mitochondrial.